We begin with the raw amino-acid sequence, 1681 residues long: Probable clathrin heavy chain 1 (1681 aa).

WD40-like repeat stretches follow at residues 22–65 (NITF…RPIS), 66–105 (ADSV…NVED), 106–147 (VVYW…QSLA), 148–193 (GTQI…QPIE), 194–255 (GHAA…ADTA), 256–299 (GDFP…ISTD), and 300–328 (TVFV…VSID). CHCR repeat units follow at residues 539–685 (SENG…QVVV), 688–830 (ASKY…SEDA), 835–974 (IINT…QLID), 981–1126 (LSET…VKEA), 1130–1271 (FIKA…FRLA), 1276–1422 (LHIV…LLLN), and 1425–1568 (LTVL…YDCF). The span at 1616–1628 (ERSEHERKEEKAE) shows a compositional bias: basic and acidic residues. Residues 1616 to 1635 (ERSEHERKEEKAEQQQNNGM) are disordered.

This sequence belongs to the clathrin heavy chain family. As to quaternary structure, clathrin triskelions, composed of 3 heavy chains and 3 light chains, are the basic subunits of the clathrin coat. May interact with beta arrestin arr-1.

Its subcellular location is the cytoplasmic vesicle membrane. It localises to the membrane. The protein resides in the coated pit. In terms of biological role, clathrin is the major protein of the polyhedral coat of coated pits and vesicles. May play a role in yolk protein clatherin-mediated endocytosis by oocytes during oogenesis. This is Probable clathrin heavy chain 1 (chc-1) from Caenorhabditis elegans.